The sequence spans 480 residues: UDP-glucose 6-dehydrogenase 3 (480 aa).

Residues 8–13 (GAGYVG), Asp33, Arg38, 86–90 (VNTPT), 127–128 (ST), and Glu161 contribute to the NAD(+) site. Substrate contacts are provided by residues 157–161 (EFLAE), 216–223 (KLAANAFL), and 256–269 (RIGP…VGFG). The active-site Nucleophile is the Cys272. 272–275 (CFQK) contacts NAD(+). Position 334–335 (334–335 (FK)) interacts with substrate. An NAD(+)-binding site is contributed by Arg342. Ser393 is modified (phosphoserine). Arg447 is a binding site for substrate.

The protein belongs to the UDP-glucose/GDP-mannose dehydrogenase family.

The enzyme catalyses UDP-alpha-D-glucose + 2 NAD(+) + H2O = UDP-alpha-D-glucuronate + 2 NADH + 3 H(+). Its pathway is nucleotide-sugar biosynthesis; UDP-alpha-D-glucuronate biosynthesis; UDP-alpha-D-glucuronate from UDP-alpha-D-glucose: step 1/1. Its function is as follows. Involved in the biosynthesis of UDP-glucuronic acid (UDP-GlcA), providing nucleotide sugars for cell-wall polymers. The chain is UDP-glucose 6-dehydrogenase 3 (UGD3) from Oryza sativa subsp. japonica (Rice).